The primary structure comprises 393 residues: Stimulated by retinoic acid gene 8 protein (393 aa).

The segment covering 1–11 (MATPGEGNQPS) has biased composition (polar residues). The disordered stretch occupies residues 1 to 25 (MATPGEGNQPSDDGAPQPLAQLQKL). Positions 28 to 33 (RVVRRR) match the Nuclear localization signal (NLS) motif. Residues 66 to 95 (QVLNRTKIHIQEQEESLDKLLKLKASFNLQ) adopt a coiled-coil conformation. Residues 124–201 (FLQDSPPEWF…EEKKVDLSHS (78 aa)) are disordered. A compositionally biased stretch (acidic residues) spans 141–192 (DAEEEGEEEGEEEGEEGEEEEEGDEEGEEEEENGEEREVEEYQEEEEEEEEE). The short motif at 209-218 (LMEFERYLNF) is the Nuclear export signal (NES) element.

In terms of assembly, interacts with XPO1. Interacts with MEIOSIN. Post-translationally, phosphorylated in P19 EC cells. In terms of tissue distribution, expressed exclusively in premeiotic germ cells in both sexes. In females, is expressed in the embryonic ovary. In males, is expressed in pubertal and adult testes, in premeiotic spermatogenic cells. Expressed by some type A and B spermatogonia, preleptotene spermatocytes, and early leptotene spermatocytes (at protein level). Expression begins in late undifferentiated spermatogonia and persists during differentiating spermatogonia (at protein level).

It is found in the cytoplasm. It localises to the nucleus. In terms of biological role, meiosis-inducer required for the transition into meiosis for both female and male germ cells. In female germ cells, acts downstream of ZGLP1 as a key effector of the meiotic program: required for premeiotic DNA replication and subsequent events in meiotic prophase. During spermatogenesis, next to its role in meiotic initiation, promotes (but is not required for) spermatogonial differentiation. In complex with MEIOSIN, directly activates the transcription of a subset of critical meiotic genes playing a central role in cell-cycle switching from mitosis to meiosis. The protein is Stimulated by retinoic acid gene 8 protein of Mus musculus (Mouse).